Reading from the N-terminus, the 71-residue chain is Disintegrin tzabcanin (71 aa).

Residues 1 to 71 (GEECDCGSPA…ADCPRNHFHA (71 aa)) enclose the Disintegrin domain. Intrachain disulfides connect Cys-4–Cys-19, Cys-6–Cys-14, Cys-13–Cys-36, Cys-27–Cys-33, Cys-32–Cys-57, and Cys-45–Cys-64. The short motif at 49–51 (RGD) is the Cell attachment site element.

This sequence belongs to the venom metalloproteinase (M12B) family. P-II subfamily. P-IIa sub-subfamily. Expressed by the venom gland.

Its subcellular location is the secreted. Functionally, inhibits fibrinogen interaction with platelets. Acts by binding to alpha-IIb/beta-3 (ITGA2B/ITGB3) on the platelet surface and inhibits aggregation induced by ADP, thrombin, platelet-activating factor and collagen. Inhibits cell adhesion to vitronectin, probably by blocking its receptor integrin alpha-V/beta-3 (ITGAV/ITGB3), and to fibronectin in vitro. Shows little to no cytotoxicity in vitro. This chain is Disintegrin tzabcanin, found in Crotalus tzabcan (Yucatan neotropical rattlesnake).